The following is a 339-amino-acid chain: Anthranilate phosphoribosyltransferase (339 aa).

5-phospho-alpha-D-ribose 1-diphosphate contacts are provided by residues G79, 82-83 (GD), T87, 89-92 (NIST), 107-115 (KHGNRAVSS), and S119. G79 is a binding site for anthranilate. S91 is a binding site for Mg(2+). N110 contacts anthranilate. R165 is an anthranilate binding site. Mg(2+) is bound by residues D224 and E225.

The protein belongs to the anthranilate phosphoribosyltransferase family. In terms of assembly, homodimer. Mg(2+) is required as a cofactor.

It carries out the reaction N-(5-phospho-beta-D-ribosyl)anthranilate + diphosphate = 5-phospho-alpha-D-ribose 1-diphosphate + anthranilate. It participates in amino-acid biosynthesis; L-tryptophan biosynthesis; L-tryptophan from chorismate: step 2/5. Catalyzes the transfer of the phosphoribosyl group of 5-phosphorylribose-1-pyrophosphate (PRPP) to anthranilate to yield N-(5'-phosphoribosyl)-anthranilate (PRA). This is Anthranilate phosphoribosyltransferase from Geobacillus thermodenitrificans (strain NG80-2).